A 499-amino-acid chain; its full sequence is Signal recognition particle subunit SRP54 2 (499 aa).

A G-domain region spans residues 1 to 295; that stretch reads MVLAELGGSI…DVKPFVSRLL (295 aa). GTP is bound by residues 108–115, 190–194, and 248–251; these read GLQGSGKT, DTSGR, and TKMD. Residues 296-499 are M-domain; it reads GMGDWSGFMD…MGGMFGGGDK (204 aa).

This sequence belongs to the GTP-binding SRP family. SRP54 subfamily. In terms of assembly, component of a signal recognition particle (SRP) complex that consists of a 7SL RNA molecule of 300 nucleotides and six protein subunits: SRP72, SRP68, SRP54, SRP19, SRP14 and SRP9.

It localises to the cytoplasm. Its subcellular location is the endoplasmic reticulum. The catalysed reaction is GTP + H2O = GDP + phosphate + H(+). Component of the signal recognition particle (SRP) complex, a ribonucleoprotein complex that mediates the cotranslational targeting of secretory and membrane proteins to the endoplasmic reticulum (ER). As part of the SRP complex, associates with the SRP receptor (SR) component SRPRA to target secretory proteins to the endoplasmic reticulum membrane. Binds to the signal sequence of presecretory proteins when they emerge from the ribosomes. Displays basal GTPase activity, and stimulates reciprocal GTPase activation of the SR subunit SRPRA. Forms a guanosine 5'-triphosphate (GTP)-dependent complex with the SR subunit SRPRA. SR compaction and GTPase mediated rearrangement of SR drive SRP-mediated cotranslational protein translocation into the ER. Requires the presence of SRP9/SRP14 and/or SRP19 to stably interact with RNA. The protein is Signal recognition particle subunit SRP54 2 of Solanum lycopersicum (Tomato).